The primary structure comprises 293 residues: Lipoyl synthase (293 aa).

The [4Fe-4S] cluster site is built by cysteine 38, cysteine 43, cysteine 49, cysteine 64, cysteine 68, cysteine 71, and serine 277. One can recognise a Radical SAM core domain in the interval 50-266; that stretch reads WSRGTATFLL…STIAKNAGIR (217 aa).

This sequence belongs to the radical SAM superfamily. Lipoyl synthase family. The cofactor is [4Fe-4S] cluster.

The protein resides in the cytoplasm. It catalyses the reaction [[Fe-S] cluster scaffold protein carrying a second [4Fe-4S](2+) cluster] + N(6)-octanoyl-L-lysyl-[protein] + 2 oxidized [2Fe-2S]-[ferredoxin] + 2 S-adenosyl-L-methionine + 4 H(+) = [[Fe-S] cluster scaffold protein] + N(6)-[(R)-dihydrolipoyl]-L-lysyl-[protein] + 4 Fe(3+) + 2 hydrogen sulfide + 2 5'-deoxyadenosine + 2 L-methionine + 2 reduced [2Fe-2S]-[ferredoxin]. It functions in the pathway protein modification; protein lipoylation via endogenous pathway; protein N(6)-(lipoyl)lysine from octanoyl-[acyl-carrier-protein]: step 2/2. Its function is as follows. Catalyzes the radical-mediated insertion of two sulfur atoms into the C-6 and C-8 positions of the octanoyl moiety bound to the lipoyl domains of lipoate-dependent enzymes, thereby converting the octanoylated domains into lipoylated derivatives. In Chlorobium chlorochromatii (strain CaD3), this protein is Lipoyl synthase.